The following is a 117-amino-acid chain: Ribosome maturation factor RimP (117 aa).

This sequence belongs to the RimP family.

Its subcellular location is the cytoplasm. In terms of biological role, required for maturation of 30S ribosomal subunits. The sequence is that of Ribosome maturation factor RimP from Rickettsia prowazekii (strain Madrid E).